The primary structure comprises 78 residues: Short neurotoxin OH-26 (78 aa).

A signal peptide spans 1-21 (MKNLLLTFLVVTIVCLDLGYT). Intrachain disulfides connect Cys-24/Cys-40, Cys-33/Cys-58, Cys-62/Cys-70, and Cys-71/Cys-76.

Belongs to the three-finger toxin family. Short-chain subfamily. In terms of tissue distribution, expressed by the venom gland.

The protein localises to the secreted. Its function is as follows. This three-finger toxin binds and inhibits the nicotinic acetylcholine receptor (nAChR). The chain is Short neurotoxin OH-26 from Ophiophagus hannah (King cobra).